Reading from the N-terminus, the 423-residue chain is Adenylosuccinate synthetase (423 aa).

GTP-binding positions include 12 to 18 (GDEGKGK) and 40 to 42 (GHT). Asp-13 (proton acceptor) is an active-site residue. Mg(2+) is bound by residues Asp-13 and Gly-40. Residues 13-16 (DEGK), 38-41 (NAGH), Thr-129, Arg-143, Gln-221, Thr-236, and Arg-300 contribute to the IMP site. His-41 acts as the Proton donor in catalysis. A substrate-binding site is contributed by 296–302 (SVTGRKR). Residues Arg-302 and 408-410 (SVG) contribute to the GTP site.

The protein belongs to the adenylosuccinate synthetase family. In terms of assembly, homodimer. The cofactor is Mg(2+).

It is found in the cytoplasm. The enzyme catalyses IMP + L-aspartate + GTP = N(6)-(1,2-dicarboxyethyl)-AMP + GDP + phosphate + 2 H(+). The protein operates within purine metabolism; AMP biosynthesis via de novo pathway; AMP from IMP: step 1/2. Functionally, plays an important role in the de novo pathway of purine nucleotide biosynthesis. Catalyzes the first committed step in the biosynthesis of AMP from IMP. This is Adenylosuccinate synthetase from Bacteroides thetaiotaomicron (strain ATCC 29148 / DSM 2079 / JCM 5827 / CCUG 10774 / NCTC 10582 / VPI-5482 / E50).